The following is a 118-amino-acid chain: Protein BEX4 (118 aa).

Positions 14–50 are disordered; that stretch reads VEKDKKDKKGGKASKQSEEEPHHLEEVENKKPGGNVR. Basic and acidic residues predominate over residues 28–44; it reads KQSEEEPHHLEEVENKK. The segment at 30 to 88 is interaction with SIRT2; that stretch reads SEEEPHHLEEVENKKPGGNVRRKVRRLVPNFLWAIPNRHVDRNEGGEDVGRFVVQGTEV. Positions 30-118 are interaction with alpha-tubulin; that stretch reads SEEEPHHLEE…DNHYDFCLIP (89 aa). Residue Cys-115 coordinates Zn(2+).

It belongs to the BEX family. Interacts with alpha-tubulin. Interacts with SIRT2. Post-translationally, ubiquitinated and degraded by the proteasome. Expressed in both Sertoli and germ cells as well as interstitial area of the testis (at protein level).

Its subcellular location is the cytoplasm. It is found in the cytoskeleton. The protein localises to the spindle pole. It localises to the nucleus. Its function is as follows. May play a role in microtubule deacetylation by negatively regulating the SIRT2 deacetylase activity toward alpha-tubulin and thereby participate in the control of cell cycle progression and genomic stability. In absence of reductive stress, acts as a pseudosubstrate for the CRL2(FEM1B) complex: associates with FEM1B via zinc, thereby preventing association between FEM1B and its substrates. This is Protein BEX4 from Mus musculus (Mouse).